An 807-amino-acid polypeptide reads, in one-letter code: Serine/threonine-protein kinase B-raf (807 aa).

2 stretches are compositionally biased toward low complexity: residues 1-15 (MAAL…GASL) and 110-128 (SVSS…SSSL). 2 disordered regions span residues 1 to 36 (MAAL…YAGS) and 104 to 128 (GNGT…SSSL). The RBD domain maps to 155-227 (PIVRVFLPNK…TGEELHVEVL (73 aa)). Residues 234–280 (THNFVRKTFFTLAFCDFCRKLLFQGFRCQTCGYKFHQRCSTEVPLMC) form a Phorbol-ester/DAG-type zinc finger. Residues H235, C248, C251, C261, C264, H269, C272, and C280 each contribute to the Zn(2+) site. Residues 303-313 (EETTLGETTPA) show a composition bias toward polar residues. Disordered regions lie at residues 303-372 (EETT…VHIN) and 434-494 (STAG…EIPD). The segment covering 314-328 (SGSYPSVPPSDSVGP) has biased composition (low complexity). Basic and acidic residues-rich tracts occupy residues 348-363 (PADE…RDRS) and 463-487 (QRER…RDSS). One can recognise a Protein kinase domain in the interval 497-757 (ITVGQRIGSG…PQILASIELL (261 aa)). Residues 503-511 (IGSGSFGTV) and K523 each bind ATP. D616 acts as the Proton acceptor in catalysis. The residue at position 790 (S790) is a Phosphoserine; by MAPK1. At T793 the chain carries Phosphothreonine; by MAPK1.

Belongs to the protein kinase superfamily. TKL Ser/Thr protein kinase family. RAF subfamily. Zn(2+) serves as cofactor. In terms of processing, phosphorylated. Expressed preferentially in neural tissue.

The protein resides in the nucleus. It localises to the cytoplasm. It is found in the cell membrane. The enzyme catalyses L-seryl-[protein] + ATP = O-phospho-L-seryl-[protein] + ADP + H(+). It carries out the reaction L-threonyl-[protein] + ATP = O-phospho-L-threonyl-[protein] + ADP + H(+). In quiescent cells, maintained in an inactive state via an intramolecular interaction between the protein kinase and N-terminal domains. Following mitogen-mediated cell activation, binds via its RGB domain to active HRAS (GTP-bound) which releases the inhibitory intramolecular interaction between the two domains. This allows the MAP2K1-mediated dimerization of KSR1 or KSR2, and BRAF which activates BRAF. Functionally, protein kinase involved in the activation of the MAP signaling cascade. May play a role in transducing specific signals in neural cells. In Coturnix japonica (Japanese quail), this protein is Serine/threonine-protein kinase B-raf.